A 472-amino-acid polypeptide reads, in one-letter code: ATP synthase subunit beta (472 aa).

150–157 contributes to the ATP binding site; the sequence is GGAGVGKT.

Belongs to the ATPase alpha/beta chains family. In terms of assembly, F-type ATPases have 2 components, CF(1) - the catalytic core - and CF(0) - the membrane proton channel. CF(1) has five subunits: alpha(3), beta(3), gamma(1), delta(1), epsilon(1). CF(0) has four main subunits: a, b, b' and c.

Its subcellular location is the cellular chromatophore membrane. It carries out the reaction ATP + H2O + 4 H(+)(in) = ADP + phosphate + 5 H(+)(out). Functionally, produces ATP from ADP in the presence of a proton gradient across the membrane. The catalytic sites are hosted primarily by the beta subunits. This chain is ATP synthase subunit beta, found in Rhodobacter capsulatus (Rhodopseudomonas capsulata).